The sequence spans 299 residues: Protease HtpX homolog (299 aa).

2 helical membrane-spanning segments follow: residues 14–34 and 39–59; these read WLLLLVFFLLLGLVGYGVGYL and GFGGLILALVIGFIYAVTMIF. Histidine 143 is a Zn(2+) binding site. Residue glutamate 144 is part of the active site. Histidine 147 provides a ligand contact to Zn(2+). The next 2 helical transmembrane spans lie at 153–173 and 198–218; these read IRISTIAVALASAITMLAVMA and IILLIISLIAIILAPLAATLV. Position 227 (glutamate 227) interacts with Zn(2+).

Belongs to the peptidase M48B family. The cofactor is Zn(2+).

The protein resides in the cell membrane. The polypeptide is Protease HtpX homolog (Streptococcus thermophilus (strain ATCC BAA-491 / LMD-9)).